Consider the following 401-residue polypeptide: Pectate lyase (401 aa).

An N-terminal signal peptide occupies residues 1-20 (MATTILPLILFISSLAIASS). An N-linked (GlcNAc...) asparagine glycan is attached at Asn-38. Asp-199, Asp-223, and Asp-227 together coordinate Ca(2+). The active site involves Arg-279.

Belongs to the polysaccharide lyase 1 family. Requires Ca(2+) as cofactor. Expressed in sites of vascular differentiation and in new primordia on the flank of the shoot meristem.

It catalyses the reaction Eliminative cleavage of (1-&gt;4)-alpha-D-galacturonan to give oligosaccharides with 4-deoxy-alpha-D-galact-4-enuronosyl groups at their non-reducing ends.. Its pathway is glycan metabolism; pectin degradation; 2-dehydro-3-deoxy-D-gluconate from pectin: step 2/5. Functionally, involved in the degradation of pectin. May assist in the removal and modification of an existing pectin matrix in order to allow the deposition of newly synthesized walls polymers for a specialized function or to create an architecture that is extensible. This is Pectate lyase from Zinnia elegans (Garden zinnia).